The sequence spans 538 residues: Atos homolog protein B (538 aa).

Low complexity predominate over residues 1 to 18; the sequence is MRHVQAEPSPSSEPEAGP. Disordered regions lie at residues 1-103, 156-185, and 197-308; these read MRHV…GLLG, HTRD…QLHT, and GGKS…PMGR. The span at 227–238 shows a compositional bias: pro residues; it reads HTPPGPGPPGPC. 2 positions are modified to phosphoserine: serine 254 and serine 255. Over residues 274–286 the composition is skewed to polar residues; it reads AANSSDAKATSFW. The required for macropage invasion stretch occupies residues 348-430; sequence LLGNFEESLL…VPKVGTVQVT (83 aa). A transactivation domain 1 (TAD1) region spans residues 436–444; it reads QTVVKMFLV.

This sequence belongs to the ATOS family.

It localises to the nucleus. Transcription regulator that may syncronize transcriptional and translational programs. This chain is Atos homolog protein B, found in Macaca fascicularis (Crab-eating macaque).